Here is a 1173-residue protein sequence, read N- to C-terminus: AT-rich interactive domain-containing protein 5B (1173 aa).

Lys-130 participates in a covalent cross-link: Glycyl lysine isopeptide (Lys-Gly) (interchain with G-Cter in SUMO2). The tract at residues 249–283 (PNLKGRPRKKKPCPQRRDSFSGGKDPNNNSDGKSV) is disordered. Residues 253–262 (GRPRKKKPCP) are compositionally biased toward basic residues. A Phosphoserine modification is found at Ser-267. In terms of domain architecture, ARID spans 322–414 (RADEQAFLVA…LILPYERFIK (93 aa)). The residue at position 340 (Lys-340) is an N6,N6-dimethyllysine. A disordered region spans residues 416–607 (EEDKPLPPIK…QPPLANQSEV (192 aa)). Residue Lys-449 forms a Glycyl lysine isopeptide (Lys-Gly) (interchain with G-Cter in SUMO2) linkage. Over residues 450–462 (HEISKSKKEKENA) the composition is skewed to basic and acidic residues. Glycyl lysine isopeptide (Lys-Gly) (interchain with G-Cter in SUMO2) cross-links involve residues Lys-497 and Lys-499. Low complexity predominate over residues 547 to 557 (SAPLAPTPGTG). Residues 593-605 (GFSTTQPPLANQS) are compositionally biased toward polar residues. Glycyl lysine isopeptide (Lys-Gly) (interchain with G-Cter in SUMO2) cross-links involve residues Lys-763 and Lys-769. 3 disordered regions span residues 777-802 (EPRF…VEKR), 877-924 (KKSA…GTSQ), and 936-965 (HPKA…KPHP). Positions 782–796 (FSKHHLSPSKKSRGR) are enriched in basic residues. Residues Lys-878, Lys-901, Lys-905, and Lys-920 each participate in a glycyl lysine isopeptide (Lys-Gly) (interchain with G-Cter in SUMO2) cross-link. Glycyl lysine isopeptide (Lys-Gly) (interchain with G-Cter in SUMO2) cross-links involve residues Lys-973, Lys-985, and Lys-998. Position 1017 is a phosphoserine (Ser-1017). Residues 1017–1055 (SPLDPAKEVSGKEKASEQESEGSKAAHSGHSGGTSEGHK) are disordered. Positions 1021–1040 (PAKEVSGKEKASEQESEGSK) are enriched in basic and acidic residues. Glycyl lysine isopeptide (Lys-Gly) (interchain with G-Cter in SUMO2) cross-links involve residues Lys-1040 and Lys-1055. Ser-1118 bears the Phosphoserine mark.

This sequence belongs to the ARID5B family. In terms of processing, methylation at Lys-340 prevents DNA-binding. Demethylation by PHF2 promotes recruitment of the PHF2-ARID5B complex to promoters.

The protein localises to the nucleus. Functionally, transcription coactivator that binds to the 5'-AATA[CT]-3' core sequence and plays a key role in adipogenesis and liver development. Acts by forming a complex with phosphorylated PHF2, which mediates demethylation at Lys-340, leading to target the PHF2-ARID5B complex to target promoters, where PHF2 mediates demethylation of dimethylated 'Lys-9' of histone H3 (H3K9me2), followed by transcription activation of target genes. The PHF2-ARID5B complex acts as a coactivator of HNF4A in liver. Required for adipogenesis: regulates triglyceride metabolism in adipocytes by regulating expression of adipogenic genes. Overexpression leads to induction of smooth muscle marker genes, suggesting that it may also act as a regulator of smooth muscle cell differentiation and proliferation. The chain is AT-rich interactive domain-containing protein 5B (ARID5B) from Bos taurus (Bovine).